We begin with the raw amino-acid sequence, 391 residues long: Recombination and repair protein (391 aa).

60–67 lines the ATP pocket; that stretch reads GPSKSFKS. Basic and acidic residues predominate over residues 364–374; sequence KSPESKSKSAA. Positions 364–391 are disordered; it reads KSPESKSKSAADLETDLEQLSDMEEFNE. Residues 376-391 show a composition bias toward acidic residues; the sequence is LETDLEQLSDMEEFNE.

It belongs to the RecA family.

Its function is as follows. Important in genetic recombination, DNA repair, and replication. Possesses pairing and strand-transfer activity. Interacts with dda and gene 32 proteins. The protein is Recombination and repair protein (UVSX) of Enterobacteria phage T4 (Bacteriophage T4).